A 1101-amino-acid chain; its full sequence is MDCKVHMETTVSRPVLSPTHINATASETFTVLQQRMRIVEEQTSSLRDDLIMLDFGEKRGYLEAPDCLEDLDSQKVISPIQNEAICAGKTDILWKNCEFLVNRMCRLESLMQSLKMNIFRLQTEKDLNPQKTAFLKDRLNAIQEEHSKDLKLLHLEVMNLRQQLRAVKEEEDKAQDEVQRLTATLKIASQTKKNAAIIEEELKTTKRKMNLKIQELRRQLAQEKYLRESLEKSASAMLLKIQEMGSTVEVERKQVHILQQNCIALRDSIQSAQELLAQEQKKKEELEIATSQLKSDLTSRDDLISKLVEENKNLQISFNKEHEENAYLRSEIMSLHEASEKAQVLNDQLTKKCSELSCMLQTVTMEKARIIADHQAILQVEQKMMTQTFQEQNLLLDAAHASITNELQTVQNEKTQLQAHLDHLILEHNQCIQKAQDAEKRTAVQKELLESTIARLRGELEASMQEKKSLLEEKERFQREVNKTEKEIVQERCNLEKELAKNKVDINTLTHNLQTLEEENKHLADQMASLELQQVTSDYHGLAQQKVEKITESKNKLAYENGKLQIKVKQLEEQVQSFTDTSLQNDHLRKMNKYLQTKYAQANSELSAKRVHLQQADAHLKEVKSILERSKEELSRTVKCRNAALKESQKLKEDLEAVEDRENKKVGNFQRQLAEAKEDNCKVTIMLENVLASHSKMQGALEKVQIELGRRDSEIAGLKKERDLNQQRVQKLEAEVDQWQARMLVMEDQHNSEIESLQKALGVAREDNRKLAMSLEQALQTNNHLQTKLDHIQEQLESKELERQNLETFKDRMTEESKVEAELHAERIEALRKQFQTERETTKKVAQREVAELKKALDEANFRSVEVSRTNRELRQKLAELEKILESNKEKIKNQKTQIKLHLSAKANNAQNIERMKQIEKELKQMELIKDQYQKKNYEQSLSIQRFVCEMTNLQKEMQMLAKSQYDASVRNKQQELHLEAERKIRQELENRCQELEETVRHLKKCKEATENTLKEASVESEQITANLEEAHRWFKHRFDGLQLELTKNRLQRPSGEDRWQEKDQDVKHDVMSNQSVLHRWERKQNLRPMPKKYHSEVQRK.

4 coiled-coil regions span residues 106–299, 398–680, 712–940, and 970–1033; these read RLES…DLTS, AAHA…KEDN, DSEI…NYEQ, and VRNK…EAHR. Over residues 1055-1071 the composition is skewed to basic and acidic residues; the sequence is SGEDRWQEKDQDVKHDV. Positions 1055–1101 are disordered; sequence SGEDRWQEKDQDVKHDVMSNQSVLHRWERKQNLRPMPKKYHSEVQRK.

This chain is Coiled-coil domain-containing protein 150 (CCDC150), found in Homo sapiens (Human).